The sequence spans 253 residues: Ubiquinone/menaquinone biosynthesis C-methyltransferase UbiE (253 aa).

Residues threonine 76, aspartate 97, asparagine 125–alanine 126, and serine 142 each bind S-adenosyl-L-methionine.

Belongs to the class I-like SAM-binding methyltransferase superfamily. MenG/UbiE family.

It carries out the reaction a 2-demethylmenaquinol + S-adenosyl-L-methionine = a menaquinol + S-adenosyl-L-homocysteine + H(+). The catalysed reaction is a 2-methoxy-6-(all-trans-polyprenyl)benzene-1,4-diol + S-adenosyl-L-methionine = a 5-methoxy-2-methyl-3-(all-trans-polyprenyl)benzene-1,4-diol + S-adenosyl-L-homocysteine + H(+). Its pathway is quinol/quinone metabolism; menaquinone biosynthesis; menaquinol from 1,4-dihydroxy-2-naphthoate: step 2/2. It functions in the pathway cofactor biosynthesis; ubiquinone biosynthesis. Methyltransferase required for the conversion of demethylmenaquinol (DMKH2) to menaquinol (MKH2) and the conversion of 2-polyprenyl-6-methoxy-1,4-benzoquinol (DDMQH2) to 2-polyprenyl-3-methyl-6-methoxy-1,4-benzoquinol (DMQH2). This chain is Ubiquinone/menaquinone biosynthesis C-methyltransferase UbiE, found in Xanthomonas oryzae pv. oryzae (strain MAFF 311018).